The chain runs to 270 residues: Chlorophyll a-b binding protein, chloroplastic (270 aa).

The transit peptide at 1 to 41 directs the protein to the chloroplast; that stretch reads MASACASSTIAAVAFSSPSSQKNGSIVGATKASFLGGKRLR. Chlorophyll b is bound at residue Trp68. Residues Phe88, Glu107, and His110 each coordinate chlorophyll a. Residue Arg112 coordinates chlorophyll b. A helical transmembrane segment spans residues 113 to 133; the sequence is WAMLGAAGIFIPEFLTKIGVL. Gln144 provides a ligand contact to chlorophyll a. Residues 146-166 traverse the membrane as a helical segment; that stretch reads YFTDTTTLFVIELVLIGWAEG. Residues Val155, Glu165, and Arg168 each contribute to the chlorophyll b site. Chlorophyll a is bound by residues Lys221, Glu222, Asn225, Arg227, Gln239, and His254. The helical transmembrane segment at 228–248 threads the bilayer; it reads LAMLAVMGAWFQHIYTGTGPI.

This sequence belongs to the light-harvesting chlorophyll a/b-binding (LHC) protein family. As to quaternary structure, the LHC complex consists of chlorophyll a-b binding proteins. The cofactor is Binds at least 14 chlorophylls (8 Chl-a and 6 Chl-b) and carotenoids such as lutein and neoxanthin.. Post-translationally, photoregulated by reversible phosphorylation of its threonine residues.

Its subcellular location is the plastid. The protein resides in the chloroplast thylakoid membrane. Functionally, the light-harvesting complex (LHC) functions as a light receptor, it captures and delivers excitation energy to photosystems with which it is closely associated. The chain is Chlorophyll a-b binding protein, chloroplastic from Petunia hybrida (Petunia).